A 283-amino-acid polypeptide reads, in one-letter code: Protein/nucleic acid deglycase HchA (283 aa).

Zn(2+) contacts are provided by His-86, Glu-91, and His-123. The active-site Nucleophile is the Cys-185.

It belongs to the peptidase C56 family. HchA subfamily. As to quaternary structure, homodimer.

The protein resides in the cytoplasm. It catalyses the reaction N(omega)-(1-hydroxy-2-oxopropyl)-L-arginyl-[protein] + H2O = lactate + L-arginyl-[protein] + H(+). It carries out the reaction N(6)-(1-hydroxy-2-oxopropyl)-L-lysyl-[protein] + H2O = lactate + L-lysyl-[protein] + H(+). The enzyme catalyses S-(1-hydroxy-2-oxopropyl)-L-cysteinyl-[protein] + H2O = lactate + L-cysteinyl-[protein] + H(+). The catalysed reaction is N(omega)-(1-hydroxy-2-oxoethyl)-L-arginyl-[protein] + H2O = L-arginyl-[protein] + glycolate + H(+). It catalyses the reaction N(6)-(1-hydroxy-2-oxoethyl)-L-lysyl-[protein] + H2O = glycolate + L-lysyl-[protein] + H(+). It carries out the reaction S-(1-hydroxy-2-oxoethyl)-L-cysteinyl-[protein] + H2O = glycolate + L-cysteinyl-[protein] + H(+). The enzyme catalyses N(2)-(1-hydroxy-2-oxopropyl)-dGTP + H2O = lactate + dGTP + H(+). The catalysed reaction is N(2)-(1-hydroxy-2-oxopropyl)-GTP + H2O = lactate + GTP + H(+). It catalyses the reaction N(2)-(1-hydroxy-2-oxopropyl)-GDP + H2O = lactate + GDP + H(+). It carries out the reaction N(2)-(1-hydroxy-2-oxopropyl)-GMP + H2O = lactate + GMP + H(+). The enzyme catalyses N(2)-(1-hydroxy-2-oxoethyl)-dGTP + H2O = dGTP + glycolate + H(+). The catalysed reaction is N(2)-(1-hydroxy-2-oxoethyl)-GTP + H2O = glycolate + GTP + H(+). It catalyses the reaction N(2)-(1-hydroxy-2-oxoethyl)-GDP + H2O = glycolate + GDP + H(+). It carries out the reaction N(2)-(1-hydroxy-2-oxoethyl)-GMP + H2O = glycolate + GMP + H(+). The enzyme catalyses an N(2)-(1-hydroxy-2-oxopropyl)-guanosine in RNA + H2O = a guanosine in RNA + lactate + H(+). The catalysed reaction is an N(2)-(1-hydroxy-2-oxopropyl)-2'-deoxyguanosine in DNA + H2O = a 2'-deoxyguanosine in DNA + lactate + H(+). It catalyses the reaction an N(2)-(1-hydroxy-2-oxoethyl)-guanosine in RNA + H2O = a guanosine in RNA + glycolate + H(+). It carries out the reaction an N(2)-(1-hydroxy-2-oxoethyl)-2'-deoxyguanosine in DNA + H2O = a 2'-deoxyguanosine in DNA + glycolate + H(+). Functionally, protein and nucleotide deglycase that catalyzes the deglycation of the Maillard adducts formed between amino groups of proteins or nucleotides and reactive carbonyl groups of glyoxals. Thus, functions as a protein deglycase that repairs methylglyoxal- and glyoxal-glycated proteins, and releases repaired proteins and lactate or glycolate, respectively. Deglycates cysteine, arginine and lysine residues in proteins, and thus reactivates these proteins by reversing glycation by glyoxals. Acts on early glycation intermediates (hemithioacetals and aminocarbinols), preventing the formation of Schiff bases and advanced glycation endproducts (AGE). Also functions as a nucleotide deglycase able to repair glycated guanine in the free nucleotide pool (GTP, GDP, GMP, dGTP) and in DNA and RNA. Is thus involved in a major nucleotide repair system named guanine glycation repair (GG repair), dedicated to reversing methylglyoxal and glyoxal damage via nucleotide sanitization and direct nucleic acid repair. Plays an important role in protecting cells from carbonyl stress. This chain is Protein/nucleic acid deglycase HchA, found in Escherichia coli O7:K1 (strain IAI39 / ExPEC).